The sequence spans 446 residues: Ubiquitin carboxyl-terminal hydrolase MINDY-3 (446 aa).

The Nucleophile role is filled by cysteine 51. Residues 117-128 show a composition bias toward basic and acidic residues; that stretch reads DNSDITDSHPEP. Residues 117–137 are disordered; it reads DNSDITDSHPEPESSQPTDTP. The Proton acceptor role is filled by histidine 288.

The protein belongs to the MINDY deubiquitinase family. FAM188 subfamily.

Its subcellular location is the nucleus. It carries out the reaction Thiol-dependent hydrolysis of ester, thioester, amide, peptide and isopeptide bonds formed by the C-terminal Gly of ubiquitin (a 76-residue protein attached to proteins as an intracellular targeting signal).. Functionally, hydrolase that can remove 'Lys-48'-linked conjugated ubiquitin from proteins. This chain is Ubiquitin carboxyl-terminal hydrolase MINDY-3 (mindy3), found in Danio rerio (Zebrafish).